The chain runs to 149 residues: Internal scaffolding protein ORF3 (149 aa).

Belongs to the microvidae B protein family.

The protein localises to the host cytoplasm. Participates in the assembly of the viral procapsid in the cytoplasm. Released from the procapsid upon genome packaging, possibly through affinity displacement by the protein ORF8, or by proteolysis. The protein is Internal scaffolding protein ORF3 of Spiroplasma virus 4 (SpV4).